We begin with the raw amino-acid sequence, 162 residues long: MSQLTHINAAGEAHMVDVSGKAETVREARAEAYVEMQAATLAMIIDGSHHKGDVFATARIAGIQAAKRTWELIPLCHPLMLSKVEVNLQAQPEHNRVRIESLCRLTGKTGVEMEALTAASVAALTIYDMCKAVQKDMVIGPLRLLAKSGGKSGDFKVDERHD.

Residues L75 to H77 and M113 to E114 each bind substrate. D128 is a catalytic residue.

It belongs to the MoaC family. Homohexamer; trimer of dimers.

It carries out the reaction (8S)-3',8-cyclo-7,8-dihydroguanosine 5'-triphosphate = cyclic pyranopterin phosphate + diphosphate. It functions in the pathway cofactor biosynthesis; molybdopterin biosynthesis. In terms of biological role, catalyzes the conversion of (8S)-3',8-cyclo-7,8-dihydroguanosine 5'-triphosphate to cyclic pyranopterin monophosphate (cPMP). This chain is Cyclic pyranopterin monophosphate synthase, found in Klebsiella pneumoniae (strain 342).